We begin with the raw amino-acid sequence, 160 residues long: Transcription elongation factor GreA (160 aa).

The stretch at 1 to 31 (MAEKTYPMTLEEKEKLEKELEELKLVRRPEI) forms a coiled coil.

This sequence belongs to the GreA/GreB family.

Necessary for efficient RNA polymerase transcription elongation past template-encoded arresting sites. The arresting sites in DNA have the property of trapping a certain fraction of elongating RNA polymerases that pass through, resulting in locked ternary complexes. Cleavage of the nascent transcript by cleavage factors such as GreA or GreB allows the resumption of elongation from the new 3'terminus. GreA releases sequences of 2 to 3 nucleotides. This chain is Transcription elongation factor GreA, found in Streptococcus suis (strain 98HAH33).